The sequence spans 174 residues: MTLILGIDPGSRITGFGVVRQTARGCEYVASGCIRTGGGELHERLQIVFRGVSEIIRQHGPVTMGIERVFMARNADSALKLGQARGAAIVAAAEAGLEIAEYSASQVKQAVAGTGGANKEQVMMMVMHLLKLTQKPQIDASDALAIALCHAHTRSSLIPHGLATARRRGGRLRL.

Residues aspartate 8, glutamate 67, and aspartate 139 contribute to the active site. Positions 8, 67, and 139 each coordinate Mg(2+).

This sequence belongs to the RuvC family. As to quaternary structure, homodimer which binds Holliday junction (HJ) DNA. The HJ becomes 2-fold symmetrical on binding to RuvC with unstacked arms; it has a different conformation from HJ DNA in complex with RuvA. In the full resolvosome a probable DNA-RuvA(4)-RuvB(12)-RuvC(2) complex forms which resolves the HJ. Mg(2+) is required as a cofactor.

Its subcellular location is the cytoplasm. It catalyses the reaction Endonucleolytic cleavage at a junction such as a reciprocal single-stranded crossover between two homologous DNA duplexes (Holliday junction).. In terms of biological role, the RuvA-RuvB-RuvC complex processes Holliday junction (HJ) DNA during genetic recombination and DNA repair. Endonuclease that resolves HJ intermediates. Cleaves cruciform DNA by making single-stranded nicks across the HJ at symmetrical positions within the homologous arms, yielding a 5'-phosphate and a 3'-hydroxyl group; requires a central core of homology in the junction. The consensus cleavage sequence is 5'-(A/T)TT(C/G)-3'. Cleavage occurs on the 3'-side of the TT dinucleotide at the point of strand exchange. HJ branch migration catalyzed by RuvA-RuvB allows RuvC to scan DNA until it finds its consensus sequence, where it cleaves and resolves the cruciform DNA. The chain is Crossover junction endodeoxyribonuclease RuvC from Pseudomonas entomophila (strain L48).